Reading from the N-terminus, the 436-residue chain is MRQALPLVTRQGDRIAIVSGLRTPFARQATAFHGIPAVDLGKMVVGELLARSEIPADAIEQLVFGQVVQMPEAPNIAREIVLGTGMNVHTDAYSVSRACATSFQAVANVAESLMAGTIRAGIAGGADSSSVLPIGVSKALARVLVDVNKARTTRQRLTLFSRLRLRDLLPVPPAVAEYSTGLRMGDTAEQMAKTYGITREQQDALAHRSHQRAAQAWAEGKLAEEVMTTYVPPYKNPFAEDNNIRGASTLADYAKLRPAFDRKHGSVTAANSTPLTDGAAAVILMTESRAKELGLHPLGYLRSYAFTAIDVWQDMLLGPAWSTPLALERAGLTMADLTLFDMHEAFAAQTLANLQLLGSERFAREVLGRAQATGEVDDAKFNVLGGSIAYGHPFAATGARMITQTLHELRRRGGGFGLVTACAAGGLGAAMVLEAE.

Cysteine 99 functions as the Acyl-thioester intermediate in the catalytic mechanism. Residues histidine 392 and cysteine 422 each act as proton acceptor in the active site.

It belongs to the thiolase-like superfamily. Thiolase family. As to quaternary structure, heterotetramer of two alpha chains (FadJ) and two beta chains (FadI).

It is found in the cytoplasm. The enzyme catalyses an acyl-CoA + acetyl-CoA = a 3-oxoacyl-CoA + CoA. The protein operates within lipid metabolism; fatty acid beta-oxidation. Functionally, catalyzes the final step of fatty acid oxidation in which acetyl-CoA is released and the CoA ester of a fatty acid two carbons shorter is formed. This is 3-ketoacyl-CoA thiolase from Salmonella paratyphi A (strain ATCC 9150 / SARB42).